We begin with the raw amino-acid sequence, 436 residues long: Methylenetetrahydrofolate--tRNA-(uracil-5-)-methyltransferase TrmFO (436 aa).

Residue 10–15 (GAGLAG) coordinates FAD.

It belongs to the MnmG family. TrmFO subfamily. Requires FAD as cofactor.

The protein resides in the cytoplasm. The catalysed reaction is uridine(54) in tRNA + (6R)-5,10-methylene-5,6,7,8-tetrahydrofolate + NADH + H(+) = 5-methyluridine(54) in tRNA + (6S)-5,6,7,8-tetrahydrofolate + NAD(+). It catalyses the reaction uridine(54) in tRNA + (6R)-5,10-methylene-5,6,7,8-tetrahydrofolate + NADPH + H(+) = 5-methyluridine(54) in tRNA + (6S)-5,6,7,8-tetrahydrofolate + NADP(+). Its function is as follows. Catalyzes the folate-dependent formation of 5-methyl-uridine at position 54 (M-5-U54) in all tRNAs. This is Methylenetetrahydrofolate--tRNA-(uracil-5-)-methyltransferase TrmFO from Staphylococcus carnosus (strain TM300).